Reading from the N-terminus, the 91-residue chain is Non-specific lipid-transfer protein 1 (91 aa).

4 disulfides stabilise this stretch: cysteine 3-cysteine 50, cysteine 13-cysteine 27, cysteine 28-cysteine 73, and cysteine 48-cysteine 87. The a 1,2-diacyl-sn-glycero-3-phosphocholine site is built by arginine 44 and tyrosine 79.

As to quaternary structure, monomer.

In terms of biological role, plant non-specific lipid-transfer proteins transfer phospholipids as well as galactolipids across membranes. May play a role in wax or cutin deposition in the cell walls of expanding epidermal cells and certain secretory tissues. Has antifungal activity against F.solani, F.oxysporum, P.aphanidermatum and S.rolfsii. Has antibacterial activity against the Gram-positive bacterium S.aureus but not against the Gram-negative bacterium S.typhimurium. The polypeptide is Non-specific lipid-transfer protein 1 (Vigna radiata var. radiata (Mung bean)).